Reading from the N-terminus, the 266-residue chain is Cytosolic Fe-S cluster assembly factor Nubp2 homolog (266 aa).

Residue 14 to 21 (GKGGVGKS) participates in ATP binding. [4Fe-4S] cluster is bound by residues cysteine 188 and cysteine 191.

Belongs to the Mrp/NBP35 ATP-binding proteins family. Nubp2/CFD1 subfamily. In terms of assembly, heterotetramer of 2 Nubp1 and 2 Nubp2 chains. [4Fe-4S] cluster is required as a cofactor.

Its subcellular location is the cytoplasm. Functionally, component of the cytosolic iron-sulfur (Fe/S) protein assembly (CIA) machinery. Required for maturation of extramitochondrial Fe-S proteins. The Nubp1-Nubp2 heterotetramer forms a Fe-S scaffold complex, mediating the de novo assembly of an Fe-S cluster and its transfer to target apoproteins. The chain is Cytosolic Fe-S cluster assembly factor Nubp2 homolog from Drosophila virilis (Fruit fly).